Consider the following 260-residue polypeptide: MQLTSASVCLLWMGLLSWVSHRIDASQGFPSPLKRCKLQEESCLVAQAQTFFQAFQKGIPERQVAALEPIDLGTMRIESGGHSESLKFKLVMSDAKLYNLANSVVVKSLKGFTKDLTKPLKLTLLMDTPELEVRAKYDVDGKLLILPIVSKGDLTIRMNEVQTKRRITAEPVKRSDGHSYLNITDYKTITKIKGGHFDLSNLFDDNKELRESTLKVLNQEWNTLALDVQPKINEACSKAFRAILQSLWANIPYDEFFKAE.

An N-terminal signal peptide occupies residues 1–25 (MQLTSASVCLLWMGLLSWVSHRIDA).

The protein belongs to the TO family.

Its function is as follows. Component of the circadian clock or downstream effector of clock function. Required for suppressing daytime sleep (siesta) under ambient environmental temperatures. Part of a heat avoidance mechanism that modulates daytime sleep behavior under different environmental temperatures to minimize the risk of heat exposure. Under cooler ambient temperatures, suppresses daytime sleep (siesta) and thus allows for longer periods of daytime activity. The protein is Circadian clock-controlled protein daywake of Drosophila yakuba (Fruit fly).